We begin with the raw amino-acid sequence, 107 residues long: MKVLVILFGAMLVLMEFQKASAATLLEDFDDDDDLLDDGGDFDLEANSDASSGNGNDSNDAVPEKRRACADLRGKTFCRLFKSYCDKKGIRGRLMRDKCSYSCGCRG.

The signal sequence occupies residues 1-22 (MKVLVILFGAMLVLMEFQKASA). Residues 23-67 (ATLLEDFDDDDDLLDDGGDFDLEANSDASSGNGNDSNDAVPEKRR) constitute a propeptide that is removed on maturation. Over residues 37 to 46 (DDGGDFDLEA) the composition is skewed to acidic residues. Positions 37–62 (DDGGDFDLEANSDASSGNGNDSNDAV) are disordered. Positions 47–61 (NSDASSGNGNDSNDA) are enriched in low complexity. Cystine bridges form between Cys69–Cys105, Cys78–Cys99, and Cys85–Cys103. Arg106 carries the post-translational modification Arginine amide.

The protein belongs to the coral AMP family. As to expression, is specifically expressed in the granular cells of the ectoderm.

Its subcellular location is the cytoplasm. The protein resides in the stress granule. It localises to the secreted. In terms of biological role, cationic peptide with probable antimicrobial activity against coral pathogens. Shows in vitro activity against Gram-positive bacteria and the filamentous fungus F.oxysporum (MIC=1.25 uM). Gram-positive bacteria tested are B.megaterium (MIC=20 uM), S.aureus (MIC=5 uM), M. luteus (MIC=1.25 uM), B.stationis (MIC=10 uM), M.maritypicum (MIC=20 uM). Has no or little effect against Gram-negative bacteria (the coral pathogen V.coralliilyticus (MIC&gt;20 uM), V.aesturianus (MIC&gt;20 uM), V.shiloi (MIC&gt;20 uM), and E.coli (MIC=10 uM)). Has no hemolytic activity against sheep erythrocytes. The sequence is that of Antimicrobial peptide damicornin from Pocillopora damicornis (Cauliflower coral).